We begin with the raw amino-acid sequence, 39 residues long: Decorsin (39 aa).

Residues 27-38 form a high affinity binding domain region; the sequence is CRFPRGDADPYC. The Cell attachment site motif lies at 31 to 33; it reads RGD.

It belongs to the ornatin family.

It localises to the secreted. Inhibits fibrinogen interaction with platelet receptors expressed on glycoprotein IIb-IIIa complex. May prevent blood from clotting during either feeding and/or storage of ingested blood. The sequence is that of Decorsin from Macrobdella decora (North American leech).